The sequence spans 227 residues: Glutathione S-transferase U13 (227 aa).

The region spanning Asp-5–Pro-86 is the GST N-terminal domain. Glutathione contacts are provided by residues Ser-15–Pro-16, Glu-43–Lys-44, Lys-57–Val-58, and Glu-70–Ser-71. The region spanning Asp-92 to Phe-224 is the GST C-terminal domain. Residue Thr-158 is modified to Phosphothreonine.

Belongs to the GST superfamily. Tau family.

The protein resides in the cytoplasm. Its subcellular location is the cytosol. It catalyses the reaction RX + glutathione = an S-substituted glutathione + a halide anion + H(+). In terms of biological role, in vitro, possesses glutathione S-transferase activity toward 1-chloro-2,4-dinitrobenzene (CDNB) and benzyl isothiocyanate (BITC). May be involved in the conjugation of reduced glutathione to a wide number of exogenous and endogenous hydrophobic electrophiles and have a detoxification role against certain herbicides. In Arabidopsis thaliana (Mouse-ear cress), this protein is Glutathione S-transferase U13 (GSTU13).